The chain runs to 180 residues: Nucleoside triphosphate/diphosphate phosphatase (180 aa).

The active-site Proton donor is the R26. Residues N90, D106, D108, D110, D123, and E126 each coordinate Mg(2+).

This sequence belongs to the Ntdp family. Mg(2+) is required as a cofactor.

The enzyme catalyses a ribonucleoside 5'-triphosphate + H2O = a ribonucleoside 5'-diphosphate + phosphate + H(+). It catalyses the reaction a ribonucleoside 5'-diphosphate + H2O = a ribonucleoside 5'-phosphate + phosphate + H(+). Functionally, has nucleoside phosphatase activity towards nucleoside triphosphates and nucleoside diphosphates. The polypeptide is Nucleoside triphosphate/diphosphate phosphatase (Staphylococcus aureus (strain MRSA252)).